Reading from the N-terminus, the 63-residue chain is Large ribosomal subunit protein uL29 (63 aa).

This sequence belongs to the universal ribosomal protein uL29 family.

The sequence is that of Large ribosomal subunit protein uL29 from Shewanella baltica (strain OS223).